The primary structure comprises 437 residues: Na(+)/H(+) antiporter NhaA (437 aa).

Helical transmembrane passes span 29–49, 74–94, 111–131, 139–159, 168–188, 196–216, 229–249, 307–327, 341–361, 376–396, and 411–431; these read TAGIILLLSTLLALGLANTAW, LKHWINDGLMTFFFFVIALEL, LPVAAALGGMAAPAGIYLLLV, GWGTVMSTDTAFVIGCLALLG, LFLLSLAIFDDIGAILIVAVG, VALGTGGLGFAFVAGIALLGI, IWLAFDASGVHATLVGVILGL, IALHPWVAFAIMPLFAVSNAG, IAIVVAFVVGKPAGIVLFSFL, WSLLAAGSLLTGIGFTMALFI, and LGVLGASVISAALGFMALTLL.

Belongs to the NhaA Na(+)/H(+) (TC 2.A.33) antiporter family.

It localises to the cell inner membrane. It catalyses the reaction Na(+)(in) + 2 H(+)(out) = Na(+)(out) + 2 H(+)(in). Its function is as follows. Na(+)/H(+) antiporter that extrudes sodium in exchange for external protons. In Rhizobium meliloti (strain 1021) (Ensifer meliloti), this protein is Na(+)/H(+) antiporter NhaA.